Here is a 40-residue protein sequence, read N- to C-terminus: Photosystem II reaction center protein J (40 aa).

Residues 8 to 28 traverse the membrane as a helical segment; sequence IPLWLIGTVAGIPVIGLVGVF.

It belongs to the PsbJ family. As to quaternary structure, PSII is composed of 1 copy each of membrane proteins PsbA, PsbB, PsbC, PsbD, PsbE, PsbF, PsbH, PsbI, PsbJ, PsbK, PsbL, PsbM, PsbT, PsbX, PsbY, PsbZ, Psb30/Ycf12, at least 3 peripheral proteins of the oxygen-evolving complex and a large number of cofactors. It forms dimeric complexes.

It localises to the plastid. The protein resides in the chloroplast thylakoid membrane. In terms of biological role, one of the components of the core complex of photosystem II (PSII). PSII is a light-driven water:plastoquinone oxidoreductase that uses light energy to abstract electrons from H(2)O, generating O(2) and a proton gradient subsequently used for ATP formation. It consists of a core antenna complex that captures photons, and an electron transfer chain that converts photonic excitation into a charge separation. In Hordeum jubatum (Foxtail barley), this protein is Photosystem II reaction center protein J.